A 354-amino-acid chain; its full sequence is tRNA-specific 2-thiouridylase MnmA (354 aa).

Residues 6–13 (LLSGGVDS) and Leu33 each bind ATP. The Nucleophile role is filled by Cys100. Cys100 and Cys195 are oxidised to a cystine. Gly123 contacts ATP. The segment at 145–147 (KDQ) is interaction with tRNA. The active-site Cysteine persulfide intermediate is the Cys195.

It belongs to the MnmA/TRMU family.

The protein resides in the cytoplasm. The enzyme catalyses S-sulfanyl-L-cysteinyl-[protein] + uridine(34) in tRNA + AH2 + ATP = 2-thiouridine(34) in tRNA + L-cysteinyl-[protein] + A + AMP + diphosphate + H(+). Catalyzes the 2-thiolation of uridine at the wobble position (U34) of tRNA, leading to the formation of s(2)U34. This chain is tRNA-specific 2-thiouridylase MnmA, found in Borrelia hermsii (strain HS1 / DAH).